A 173-amino-acid chain; its full sequence is ATP-dependent protease subunit HslV (173 aa).

Thr2 is a catalytic residue. 3 residues coordinate Na(+): Gly158, Asp161, and Thr164.

Belongs to the peptidase T1B family. HslV subfamily. In terms of assembly, a double ring-shaped homohexamer of HslV is capped on each side by a ring-shaped HslU homohexamer. The assembly of the HslU/HslV complex is dependent on binding of ATP.

It localises to the cytoplasm. The enzyme catalyses ATP-dependent cleavage of peptide bonds with broad specificity.. With respect to regulation, allosterically activated by HslU binding. Protease subunit of a proteasome-like degradation complex believed to be a general protein degrading machinery. This is ATP-dependent protease subunit HslV from Actinobacillus succinogenes (strain ATCC 55618 / DSM 22257 / CCUG 43843 / 130Z).